The primary structure comprises 185 residues: MISSNDFRPGVSIEWNNGVWRVVEFLHVKPGKGSAFVRTKLKNVQNGNVVEQTFRAGEMVPQANLEKSLMQHTYKEGDQYVFMDMETYEEARLTAAQIGDRVKYLKEGMEASVIRWGEQVMEVELPNSVVLEVVQTDPGVKGDTATGGTKPAIVETGAQVMVPLFITVGERIKIDTRNDSYLGRE.

Belongs to the elongation factor P family.

The protein resides in the cytoplasm. Its pathway is protein biosynthesis; polypeptide chain elongation. Its function is as follows. Involved in peptide bond synthesis. Stimulates efficient translation and peptide-bond synthesis on native or reconstituted 70S ribosomes in vitro. Probably functions indirectly by altering the affinity of the ribosome for aminoacyl-tRNA, thus increasing their reactivity as acceptors for peptidyl transferase. This chain is Elongation factor P, found in Cyanothece sp. (strain PCC 7425 / ATCC 29141).